The primary structure comprises 157 residues: CAPA peptides (157 aa).

The N-terminal stretch at 1–21 is a signal peptide; it reads MQPTMRIIVSMALLAYAVASA. Positions 22-28 are excised as a propeptide; the sequence is YHSNVKL. Residue valine 42 is modified to Valine amide. The propeptide occupies 45-66; that stretch reads ASGNTWQLPLNDLYPEYEPAQV. Glutamine 69 bears the Pyrrolidone carboxylic acid; partial mark. A Valine amide modification is found at valine 76. 2 positions are modified to leucine amide: leucine 85 and leucine 117. Residues 120–157 constitute a propeptide that is removed on maturation; sequence AFKNDDDEITIQNESNDHSEPEQTELIHEDRRKRQTLN. Residues 131–157 form a disordered region; the sequence is QNESNDHSEPEQTELIHEDRRKRQTLN. Positions 134–151 are enriched in basic and acidic residues; sequence SNDHSEPEQTELIHEDRR.

Belongs to the pyrokinin family. In terms of tissue distribution, CAPA-periviscerokinin 1: Expressed in corpora cardiaca (CC), corpora allata (CA), antennal lobe (AL) and gnathal ganglion (GNG) (at protein level). Expression detected in most animals in CC and CA and in some animals in AL and GNG (at protein level). CAPA-periviscerokinin 2: Expressed in corpora cardiaca (CC), corpora allata (CA), antennal lobe (AL) and gnathal ganglion (GNG) (at protein level). For non-pyroglutamate form, expression in AL detected in all animals, in CC, CA and GNG in most animals (at protein level). For pyroglutamate form, expression in CC and CA detected in most animals, in AL and GNG in some animals (at protein level). CAPA-periviscerokinin 3: Expressed in corpora cardiaca (CC), corpora allata (CA), antennal lobe (AL) and gnathal ganglion (GNG). Expression detected in most animals in CC and CA and in some animals in AL and GNG (at protein level). CAPA-precursor-related peptide 3: Expressed in corpora cardiaca (CC), corpora allata (CA), antennal lobe (AL) and gnathal ganglion (GNG) (at protein level). Expression in CC and CA detected in some animals, expression in Al and GNG detected in few animals (at protein level). CAPA-trypto-pyrokinin: Expressed in corpora cardiaca (CC), corpora allata (CA), antennal lobe (AL) and gnathal ganglion (GNG) (at protein level). Expression in CC, CA and GNG detected in most animals, in AL in some animals (at protein level).

Its subcellular location is the secreted. In terms of biological role, myoactive. In Agrotis ipsilon (Black cutworm moth), this protein is CAPA peptides.